A 171-amino-acid polypeptide reads, in one-letter code: Endoribonuclease YbeY (171 aa).

3 residues coordinate Zn(2+): His130, His134, and His140.

The protein belongs to the endoribonuclease YbeY family. The cofactor is Zn(2+).

The protein localises to the cytoplasm. In terms of biological role, single strand-specific metallo-endoribonuclease involved in late-stage 70S ribosome quality control and in maturation of the 3' terminus of the 16S rRNA. This is Endoribonuclease YbeY from Neisseria meningitidis serogroup C / serotype 2a (strain ATCC 700532 / DSM 15464 / FAM18).